We begin with the raw amino-acid sequence, 128 residues long: Sulfurtransferase TusD (128 aa).

The Cysteine persulfide intermediate role is filled by Cys78.

Belongs to the DsrE/TusD family. In terms of assembly, heterohexamer, formed by a dimer of trimers. The hexameric TusBCD complex contains 2 copies each of TusB, TusC and TusD. The TusBCD complex interacts with TusE.

Its subcellular location is the cytoplasm. In terms of biological role, part of a sulfur-relay system required for 2-thiolation of 5-methylaminomethyl-2-thiouridine (mnm(5)s(2)U) at tRNA wobble positions. Accepts sulfur from TusA and transfers it in turn to TusE. This chain is Sulfurtransferase TusD, found in Escherichia coli (strain 55989 / EAEC).